The sequence spans 561 residues: MIRFEDVSVTYDGAAEPTVRGVDFTVPEGELVLLVGPSGVGKSTVLGAVSGLVPHFTGGTLRGRVTVAGRDTRTHKPRELADVVGTVGQDPLSHFVTDTVEDELAYGMESLGIAPDVMRRRVEETLDLLGLAELRDRPISTLSGGQQQRVAIGSVLTPHPKVLVLDEPTSALDPAAAEEVLAVLQRLVHDLGTTVLMAEHRLERVVQYADRVALLPAPGAPLTLGTPPEVMAASPVYPPVVDLGRLAGWSPLPLTVRDARRRAGALRERLAATETPTPTATATATAAPAPSPSRPRRPRLLRKRAPVPSAALPVAAVEALAVRRGRVEALRRVDLTASPGEIIALMGRNGAGKSTLLGALVGLVPPAGGSVRVGGAVPHRTAPRDLVRRVGLVPQEPRDLLYADTVAAECVAADGDAGAEPGTCRALVSELLPGVADGTHPRDLSEGQRLALALAVVLTARPPLLLLDEPTRGLDYAAKGRLVTLLRALAADGHAIVLATHDVELAAELAHRVVILAAGEVVADGPTAEVVVASPSFAPQVTKILAPQHWLTVTQVREALA.

The 242-residue stretch at 2–243 (IRFEDVSVTY…SPVYPPVVDL (242 aa)) folds into the ABC transporter 1 domain. 36 to 43 (GPSGVGKS) is an ATP binding site. The tract at residues 268-299 (ERLAATETPTPTATATATAAPAPSPSRPRRPR) is disordered. Positions 272–288 (ATETPTPTATATATAAP) are enriched in low complexity. Residues 315 to 543 (AAVEALAVRR…SPSFAPQVTK (229 aa)) enclose the ABC transporter 2 domain. 347–354 (GRNGAGKS) contributes to the ATP binding site.

This sequence belongs to the ABC transporter superfamily.

It is found in the cell membrane. Functionally, probably part of an ABC transporter complex. Responsible for energy coupling to the transport system. This is Putative ABC transporter ATP-binding protein SAV_5847 from Streptomyces avermitilis (strain ATCC 31267 / DSM 46492 / JCM 5070 / NBRC 14893 / NCIMB 12804 / NRRL 8165 / MA-4680).